Reading from the N-terminus, the 511-residue chain is Cytochrome P450 monooxyhenase eriC (511 aa).

A helical transmembrane segment spans residues 2–22 (VLADFISIPTVSIACLAVLGI). Position 445 (Cys-445) interacts with heme.

This sequence belongs to the cytochrome P450 family. The cofactor is heme.

Its subcellular location is the membrane. The enzyme catalyses erinacol + reduced [NADPH--hemoprotein reductase] + O2 = cyathadiol + oxidized [NADPH--hemoprotein reductase] + H2O + H(+). Its pathway is secondary metabolite biosynthesis. Functionally, cytochrome P450 monooxygenase; part of the gene cluster that mediates the biosynthesis of erinacines, cyathane-xylosides that show unique biological activities, including leishmanicidal activity, stimulating activity for nerve growth-factor synthesis, and agonistic activity toward the kappa opioid receptor. Within the pathway, eriC hydroxylates erinacol at C-15 of the seven-membered ring to yield cyathadiol. The first step of the erinacines biosynthesis pathway is catalyzed by the geranylgeranyl diphosphate (GGPP) synthase eriE via conversion of farnesyl pyrophosphate and isopentyl pyrophosphate into geranylgeranyl pyrophosphate (GGPP). GGPP is then substrate of the diterpene cyclase eriG for the production of cyatha-3,12-diene. The cytochrome P450 monooxygenase eriI then hydroxylates cyatha-3,12-diene at C-14 of the seven-membered ring to produce erinacol, which is further hydroxylated at C-15 by the cytochrome P450 monooxygenase eriC to yield cyathadiol. The cytochrome P450 monooxygenase eriA then catalyzes C-11 hydroxylation in the presence of the short chain dehydrogenase/reductase (SDR) eriH, which leads to the production of cyathatriol. The acetyltransferase eriL converts cyathatriol into 11-O-acetyl-cyathatriol. The SDR eriH catalyzes further oxidation of 11-O-acetyl-cyathatriol into 1-O-acetylcyathin A3. Finally, the glycosyl transferase eriJ tranfers xylose from UDP-xylose onto C-14 of 11-O-acetyl-cyathatriol to form eracine Q. EriJ is also able to convert 11-O-acetyl-cyathatriol to eracine Q2 by using UDP-D-glucose as cosubstrate, but at a lower rate. In Hericium erinaceus (Lion's mane mushroom), this protein is Cytochrome P450 monooxyhenase eriC.